A 78-amino-acid polypeptide reads, in one-letter code: D-alanyl carrier protein (78 aa).

One can recognise a Carrier domain in the interval 1-78 (MDVENTVVEI…KIIAKAKELQ (78 aa)). Ser-36 is modified (O-(pantetheine 4'-phosphoryl)serine).

Belongs to the DltC family. In terms of processing, 4'-phosphopantetheine is transferred from CoA to a specific serine of apo-DCP.

The protein resides in the cytoplasm. Its pathway is cell wall biogenesis; lipoteichoic acid biosynthesis. Carrier protein involved in the D-alanylation of lipoteichoic acid (LTA). The loading of thioester-linked D-alanine onto DltC is catalyzed by D-alanine--D-alanyl carrier protein ligase DltA. The DltC-carried D-alanyl group is further transferred to cell membrane phosphatidylglycerol (PG) by forming an ester bond, probably catalyzed by DltD. D-alanylation of LTA plays an important role in modulating the properties of the cell wall in Gram-positive bacteria, influencing the net charge of the cell wall. In Latilactobacillus sakei subsp. sakei (strain 23K) (Lactobacillus sakei subsp. sakei), this protein is D-alanyl carrier protein.